The primary structure comprises 427 residues: Glutamate-1-semialdehyde 2,1-aminomutase (427 aa).

Lysine 265 is modified (N6-(pyridoxal phosphate)lysine).

This sequence belongs to the class-III pyridoxal-phosphate-dependent aminotransferase family. HemL subfamily. In terms of assembly, homodimer. Pyridoxal 5'-phosphate is required as a cofactor.

It is found in the cytoplasm. The catalysed reaction is (S)-4-amino-5-oxopentanoate = 5-aminolevulinate. Its pathway is porphyrin-containing compound metabolism; protoporphyrin-IX biosynthesis; 5-aminolevulinate from L-glutamyl-tRNA(Glu): step 2/2. In Neisseria meningitidis serogroup A / serotype 4A (strain DSM 15465 / Z2491), this protein is Glutamate-1-semialdehyde 2,1-aminomutase.